A 758-amino-acid polypeptide reads, in one-letter code: Vitamin K-dependent gamma-carboxylase (758 aa).

The interval M1–A22 is disordered. A2 bears the N-acetylalanine mark. Over A2–D60 the chain is Cytoplasmic. The chain crosses the membrane as a helical span at residues P61 to Q81. At E82 to D113 the chain is on the lumenal side. A disulfide bridge links C99 with C450. The helical transmembrane segment at W114–C134 threads the bilayer. The Cytoplasmic segment spans residues Y135–R136. A helical membrane pass occupies residues I137 to W157. Residues N158–Q292 are Lumenal-facing. The Proton acceptor role is filled by K218. A helical transmembrane segment spans residues L293–P313. The Cytoplasmic portion of the chain corresponds to E314 to Q361. The chain crosses the membrane as a helical span at residues L362–F382. Residues L383–F758 lie on the Lumenal side of the membrane. N459 and N550 each carry an N-linked (GlcNAc...) asparagine glycan. Positions G732–F758 are disordered. Polar residues predominate over residues N735 to P747.

It belongs to the vitamin K-dependent gamma-carboxylase family. As to quaternary structure, monomer. May interact with CALU.

The protein localises to the endoplasmic reticulum membrane. It catalyses the reaction 4-carboxy-L-glutamyl-[protein] + 2,3-epoxyphylloquinone + H2O + H(+) = phylloquinol + L-glutamyl-[protein] + CO2 + O2. Its function is as follows. Mediates the vitamin K-dependent carboxylation of glutamate residues to calcium-binding gamma-carboxyglutamate (Gla) residues with the concomitant conversion of the reduced hydroquinone form of vitamin K to vitamin K epoxide. Catalyzes gamma-carboxylation of various proteins, such as blood coagulation factors (F2, F7, F9 and F10), osteocalcin (BGLAP) or matrix Gla protein (MGP). The protein is Vitamin K-dependent gamma-carboxylase (GGCX) of Homo sapiens (Human).